The sequence spans 536 residues: Phosphoenolpyruvate carboxykinase (ATP) (536 aa).

The substrate site is built by Arg62, Tyr203, and Lys209. ATP is bound by residues Lys209, His228, and 244 to 252; that span reads GLSGTGKTT. Residues Lys209 and His228 each contribute to the Mn(2+) site. Asp265 contributes to the Mn(2+) binding site. Residues Glu293, Arg329, 445 to 446, and Thr451 contribute to the ATP site; that span reads RI. Position 329 (Arg329) interacts with substrate.

The protein belongs to the phosphoenolpyruvate carboxykinase (ATP) family. Monomer. Mn(2+) is required as a cofactor.

The protein resides in the cytoplasm. The enzyme catalyses oxaloacetate + ATP = phosphoenolpyruvate + ADP + CO2. It functions in the pathway carbohydrate biosynthesis; gluconeogenesis. Involved in the gluconeogenesis. Catalyzes the conversion of oxaloacetate (OAA) to phosphoenolpyruvate (PEP) through direct phosphoryl transfer between the nucleoside triphosphate and OAA. This chain is Phosphoenolpyruvate carboxykinase (ATP), found in Glaesserella parasuis serovar 5 (strain SH0165) (Haemophilus parasuis).